We begin with the raw amino-acid sequence, 348 residues long: MEFVTNYTLEELKKRFTELGLEPYRAKQVFRWVYKKFVTDFEKMTDLGKKHRELLKEHFAFHPLEKLDRVEAPDAVKYLFKTKDGHILETVLIKERDHYTLCVSSQIGCAVGCTFCATALDGLKRNLSTAEIIDQYLQVQQDLGEEKIRNVVFMGMGEPLANYENVRKAVEIMVSPEGLDLSKRRITISTSGIVAQIKRMAQDPVMKEVNLAVSLNAVSQKKREELMPLTKTNTLEELMEVLKNYPLPKYRRITLEYVLIKGVNDSPNDAERLAKLIGRHKKKFKVNLIPFNPDPNLPYERPALTDIMKFQKVLWKYGISNFVRFSKGVEVFGACGQLRTQRLQLQRV.

E89 serves as the catalytic Proton acceptor. The Radical SAM core domain maps to 95–330; sequence ERDHYTLCVS…NFVRFSKGVE (236 aa). A disulfide bridge links C102 with C335. [4Fe-4S] cluster-binding residues include C109, C113, and C116. S-adenosyl-L-methionine contacts are provided by residues 157-158, S189, 214-216, and N292; these read GE and SLN. The active-site S-methylcysteine intermediate is C335.

It belongs to the radical SAM superfamily. RlmN family. [4Fe-4S] cluster is required as a cofactor.

The protein resides in the cytoplasm. The catalysed reaction is adenosine(2503) in 23S rRNA + 2 reduced [2Fe-2S]-[ferredoxin] + 2 S-adenosyl-L-methionine = 2-methyladenosine(2503) in 23S rRNA + 5'-deoxyadenosine + L-methionine + 2 oxidized [2Fe-2S]-[ferredoxin] + S-adenosyl-L-homocysteine. The enzyme catalyses adenosine(37) in tRNA + 2 reduced [2Fe-2S]-[ferredoxin] + 2 S-adenosyl-L-methionine = 2-methyladenosine(37) in tRNA + 5'-deoxyadenosine + L-methionine + 2 oxidized [2Fe-2S]-[ferredoxin] + S-adenosyl-L-homocysteine. Specifically methylates position 2 of adenine 2503 in 23S rRNA and position 2 of adenine 37 in tRNAs. This chain is Probable dual-specificity RNA methyltransferase RlmN, found in Aquifex aeolicus (strain VF5).